The sequence spans 117 residues: Photosystem II reaction center Psb28 protein (117 aa).

The protein belongs to the Psb28 family. Part of the photosystem II complex.

The protein resides in the cellular thylakoid membrane. This is Photosystem II reaction center Psb28 protein from Prochlorococcus marinus (strain MIT 9301).